The chain runs to 307 residues: Dihydroorotate dehydrogenase B (NAD(+)), catalytic subunit (307 aa).

FMN is bound by residues serine 22 and 46–47; that span reads KT. Substrate is bound by residues lysine 46, 70 to 74, and asparagine 128; that span reads NAVGL. An FMN-binding site is contributed by asparagine 128. Cysteine 131 acts as the Nucleophile in catalysis. 2 residues coordinate FMN: lysine 166 and isoleucine 192. 193 to 194 is a binding site for substrate; the sequence is NT. FMN is bound by residues glycine 218, 244 to 245, and 266 to 267; these read GG and GT.

Belongs to the dihydroorotate dehydrogenase family. Type 1 subfamily. Heterotetramer of 2 PyrK and 2 PyrD type B subunits. FMN serves as cofactor.

The protein resides in the cytoplasm. It catalyses the reaction (S)-dihydroorotate + NAD(+) = orotate + NADH + H(+). It participates in pyrimidine metabolism; UMP biosynthesis via de novo pathway; orotate from (S)-dihydroorotate (NAD(+) route): step 1/1. Its function is as follows. Catalyzes the conversion of dihydroorotate to orotate with NAD(+) as electron acceptor. The protein is Dihydroorotate dehydrogenase B (NAD(+)), catalytic subunit (pyrD) of Desulforudis audaxviator (strain MP104C).